We begin with the raw amino-acid sequence, 315 residues long: Aspartate carbamoyltransferase catalytic subunit (315 aa).

The carbamoyl phosphate site is built by Arg64 and Thr65. Lys92 serves as a coordination point for L-aspartate. Residues Arg114, His142, and Gln145 each contribute to the carbamoyl phosphate site. Residues Arg175 and Arg229 each coordinate L-aspartate. Residues Gly270 and Pro271 each contribute to the carbamoyl phosphate site.

The protein belongs to the aspartate/ornithine carbamoyltransferase superfamily. ATCase family. Heterododecamer (2C3:3R2) of six catalytic PyrB chains organized as two trimers (C3), and six regulatory PyrI chains organized as three dimers (R2).

The enzyme catalyses carbamoyl phosphate + L-aspartate = N-carbamoyl-L-aspartate + phosphate + H(+). It functions in the pathway pyrimidine metabolism; UMP biosynthesis via de novo pathway; (S)-dihydroorotate from bicarbonate: step 2/3. Catalyzes the condensation of carbamoyl phosphate and aspartate to form carbamoyl aspartate and inorganic phosphate, the committed step in the de novo pyrimidine nucleotide biosynthesis pathway. The chain is Aspartate carbamoyltransferase catalytic subunit from Xanthobacter autotrophicus (strain ATCC BAA-1158 / Py2).